The chain runs to 326 residues: MPSVRASDPKQQLYPIAELEQLSQEDVRNIAKTHRSPTLLRTQTKFCVGRRGELSYDTTLAPLQYSEPGDSILRGSDKQDGNDSSLSILSRLWCYGVSRRKAQASEIDSELVARGISKVLEDSHAKLDGFGSHQLYDSQTYNDYYSRSAGNQISERGEGGERSNLFIAVHKPRHPQSYQPVSDPSVLAGYESVRERRDVFRFGGGTNFEQGGSTENRGNYSEIPELTLLNYEQGTHSSLITERDGYKFWSGMSICETIYTATRDEIEEYELSRGIHSVPNIIELRQRLRRRSHRNYDANHSTSGEEENSGSRSRIAELSQSTIHRR.

The interval 293 to 326 (HRNYDANHSTSGEEENSGSRSRIAELSQSTIHRR) is disordered.

This is an uncharacterized protein from Oryza latifolia (Indian wild rice).